The following is a 400-amino-acid chain: Aspartate/prephenate aminotransferase (400 aa).

Residues G39, W125, and N175 each contribute to the L-aspartate site. N6-(pyridoxal phosphate)lysine is present on K239. Residue R375 participates in L-aspartate binding.

Belongs to the class-I pyridoxal-phosphate-dependent aminotransferase family. Homodimer. Pyridoxal 5'-phosphate serves as cofactor.

It is found in the cytoplasm. The catalysed reaction is L-aspartate + 2-oxoglutarate = oxaloacetate + L-glutamate. It catalyses the reaction L-arogenate + 2-oxoglutarate = prephenate + L-glutamate. Functionally, catalyzes the reversible conversion of aspartate and 2-oxoglutarate to glutamate and oxaloacetate. Can also transaminate prephenate in the presence of glutamate. This Cereibacter sphaeroides (strain ATCC 17029 / ATH 2.4.9) (Rhodobacter sphaeroides) protein is Aspartate/prephenate aminotransferase.